A 327-amino-acid polypeptide reads, in one-letter code: Probable cell division protein WhiA (327 aa).

Positions 275–308 form a DNA-binding region, H-T-H motif; that stretch reads SLEELGRLADPVMTKDAVAGRIRRLLSMADRKAK. Residues 307–327 are disordered; sequence AKTEGIPDTESAVTPELLEEA.

Belongs to the WhiA family.

Its function is as follows. Involved in cell division and chromosome segregation. The polypeptide is Probable cell division protein WhiA (Mycobacteroides abscessus (strain ATCC 19977 / DSM 44196 / CCUG 20993 / CIP 104536 / JCM 13569 / NCTC 13031 / TMC 1543 / L948) (Mycobacterium abscessus)).